Consider the following 162-residue polypeptide: Serine-protein kinase RsbW (162 aa).

It belongs to the anti-sigma-factor family.

The enzyme catalyses L-seryl-[protein] + ATP = O-phospho-L-seryl-[protein] + ADP + H(+). It carries out the reaction L-threonyl-[protein] + ATP = O-phospho-L-threonyl-[protein] + ADP + H(+). In terms of biological role, negative regulator of sigma-B activity. Phosphorylates and inactivates its specific antagonist protein, RsbV. Upon phosphorylation of RsbV, RsbW is released and binds to sigma-B, thereby blocking its ability to form an RNA polymerase holoenzyme (E-sigma-B). The polypeptide is Serine-protein kinase RsbW (Halalkalibacterium halodurans (strain ATCC BAA-125 / DSM 18197 / FERM 7344 / JCM 9153 / C-125) (Bacillus halodurans)).